The chain runs to 146 residues: Large ribosomal subunit protein bL21 (146 aa).

The interval 96 to 146 (KKKTRRKMGHRQELTRVMVKSISITNSTPKTSSKTEVKKKSTSPKASNPEN) is disordered.

Belongs to the bacterial ribosomal protein bL21 family. As to quaternary structure, part of the 50S ribosomal subunit. Contacts protein L20.

This protein binds to 23S rRNA in the presence of protein L20. The chain is Large ribosomal subunit protein bL21 from Prochlorococcus marinus subsp. pastoris (strain CCMP1986 / NIES-2087 / MED4).